The following is a 118-amino-acid chain: Peptidyl-tRNA hydrolase (118 aa).

Belongs to the PTH2 family.

The protein resides in the cytoplasm. The enzyme catalyses an N-acyl-L-alpha-aminoacyl-tRNA + H2O = an N-acyl-L-amino acid + a tRNA + H(+). Functionally, the natural substrate for this enzyme may be peptidyl-tRNAs which drop off the ribosome during protein synthesis. The sequence is that of Peptidyl-tRNA hydrolase from Thermococcus sibiricus (strain DSM 12597 / MM 739).